The sequence spans 64 residues: Large ribosomal subunit protein bL35 (64 aa).

Residues 1–28 (MPKMKTHSGAKKRFKLTGSGKLKRQQAN) are disordered.

It belongs to the bacterial ribosomal protein bL35 family.

The sequence is that of Large ribosomal subunit protein bL35 from Renibacterium salmoninarum (strain ATCC 33209 / DSM 20767 / JCM 11484 / NBRC 15589 / NCIMB 2235).